Reading from the N-terminus, the 1024-residue chain is P3N-PIPO polyprotein (1024 aa).

One can recognise a Peptidase S30 domain in the interval 165 to 308 (RMSEASLQLF…KKQSNEIIHY (144 aa)). Residues His-216, Asp-225, and Ser-259 each act as for P1 proteinase activity in the active site. The Involved in interaction with stylet and aphid transmission signature appears at 360–363 (KITC). The Involved in virions binding and aphid transmission motif lies at 619–621 (PTK). The 123-residue stretch at 645 to 767 (MFIAKAGYCY…DSNMKTYLVG (123 aa)) folds into the Peptidase C6 domain. Residues Cys-653 and His-726 each act as for helper component proteinase activity in the active site.

It belongs to the potyviridae P3N-PIPO polyprotein family. Interacts (via PIPO domain) with host PCaP1 protein; this interaction may help to anchor the movement complex to the plasma membrane from which the complex could move to the plasmodesmata. In terms of processing, potyviral RNA is expressed as two polyproteins which undergo post-translational proteolytic processing. Genome polyprotein is processed by NIa-pro, P1 and HC-pro proteinases resulting in the production of at least ten individual proteins. P3N-PIPO is cleaved by P1 and HC-pro proteinases resulting in the production of three individual proteins. The P1 proteinase and the HC-pro cleave only their respective C-termini autocatalytically.

The protein resides in the host cell junction. It localises to the host plasmodesma. It catalyses the reaction Hydrolyzes a Gly-|-Gly bond at its own C-terminus, commonly in the sequence -Tyr-Xaa-Val-Gly-|-Gly, in the processing of the potyviral polyprotein.. Its function is as follows. Required for aphid transmission and also has proteolytic activity. Only cleaves a Gly-Gly dipeptide at its own C-terminus. Interacts with virions and aphid stylets. Acts as a suppressor of RNA-mediated gene silencing, also known as post-transcriptional gene silencing (PTGS), a mechanism of plant viral defense that limits the accumulation of viral RNAs. May have RNA-binding activity. In terms of biological role, allows efficient cell to cell propagation, by bypassing the host cell wall barrier. Transports viral genome to neighboring plant cells directly through plasmosdesmata, without any budding. In Plum pox potyvirus (strain D) (PPV), this protein is P3N-PIPO polyprotein.